We begin with the raw amino-acid sequence, 158 residues long: Ribosome maturation factor RimP (158 aa).

Belongs to the RimP family.

Its subcellular location is the cytoplasm. In terms of biological role, required for maturation of 30S ribosomal subunits. The protein is Ribosome maturation factor RimP of Pseudomonas fluorescens (strain SBW25).